A 1083-amino-acid chain; its full sequence is Solute carrier family 12 member 7 (1083 aa).

Residues 1–51 (MPTNFTVVPVEARADGAGDEAAERTEEPGSPESADPACPTPGDGNPRENSP) form a disordered region. Topologically, residues 1–119 (MPTNFTVVPV…RREIKAPRMG (119 aa)) are cytoplasmic. The segment covering 12-27 (ARADGAGDEAAERTEE) has biased composition (basic and acidic residues). Serine 30, serine 33, serine 50, and serine 62 each carry phosphoserine. Residues 120–142 (TFIGVYLPCLQNILGVILFLRLT) form a discontinuously helical membrane-spanning segment. K(+) is bound by residues asparagine 131 and isoleucine 132. Valine 135 lines the chloride pocket. At 143-149 (WIVGAAG) the chain is on the extracellular side. The helical transmembrane segment at 150-172 (VLESFLIVAMCCTCTMLTAISMS) threads the bilayer. Residues 173-196 (AIATNGVVPAGGSYYMISRSLGPE) lie on the Cytoplasmic side of the membrane. A helical membrane pass occupies residues 197–225 (FGGAVGLCFYLGTTFAGAMYILGTIEIFL). Topologically, residues 226-249 (TYISPSAAIFQAETADGEAAALLN) are extracellular. Helical transmembrane passes span 250 to 271 (NMRV…VGVK) and 272 to 300 (YVNK…KTAF). The Extracellular segment spans residues 301–419 (APPDIPVCLL…PYVLTDIMTY (119 aa)). N-linked (GlcNAc...) asparagine glycans are attached at residues asparagine 312, asparagine 331, and asparagine 360. A helical membrane pass occupies residues 420-440 (FTMLVGIYFPSVTGIMAGSNR). Residues proline 429 and threonine 432 each coordinate K(+). Proline 429 contacts chloride. Residues glycine 433 and isoleucine 434 each coordinate chloride. Residues 441–450 (SGDLKDAQKS) lie on the Cytoplasmic side of the membrane. Residues 451 to 473 (IPTGTILAIVTTSFIYLSCIVLF) form a helical membrane-spanning segment. Residues 474–504 (GACIEGVVLRDKFGEALQGNLVIGMLAWPSP) are Extracellular-facing. A helical membrane pass occupies residues 505–531 (WVIVIGSFFSTCGAGLQSLTGAPRLLQ). The Cytoplasmic portion of the chain corresponds to 532–554 (AIARDGIIPFLQVFGHGKANGEP). 2 consecutive transmembrane segments (helical) span residues 555 to 573 (TWAL…LIAS) and 574 to 598 (LDSV…ACAV). Tyrosine 589 serves as a coordination point for chloride. Residues 599 to 612 (QTLLRTPNWRPRFK) lie on the Cytoplasmic side of the membrane. 2 consecutive transmembrane segments (helical) span residues 613–635 (FYHW…ICSW) and 636–651 (YYAL…IYKY). At 652–1083 (IEYRGAEKEW…GGREVITIYS (432 aa)) the chain is on the cytoplasmic side. A scissor helix region spans residues 664–680 (GIRGLSLNAARYALLRV). Phosphothreonine occurs at positions 973 and 980.

It belongs to the SLC12A transporter family. K/Cl co-transporter subfamily. As to quaternary structure, homodimer; adopts a domain-swap conformation at the scissor helices connecting the transmembrane domain and C-terminal domain. Heterodimer with K-Cl cotransporter SLC12A5. Widely expressed with highest levels in kidney, liver and pancreas. Expressed in choroid plexus and suprachiasmatic nucleus.

It localises to the cell membrane. The enzyme catalyses K(+)(in) + chloride(in) = K(+)(out) + chloride(out). With respect to regulation, activated by N-ethylmaleimide (NEM). Inhibited by furosemide, DIDS and bumetanide. The inhibition is much stronger in the presence of 50 mM K(+) in the uptake medium. Inhibited by DIOA. Inhibited by WNK3. Mediates electroneutral potassium-chloride cotransport when activated by cell swelling. May mediate K(+) uptake into Deiters' cells in the cochlea and contribute to K(+) recycling in the inner ear. Important for the survival of cochlear outer and inner hair cells and the maintenance of the organ of Corti. May be required for basolateral Cl(-) extrusion in the kidney and contribute to renal acidification. The protein is Solute carrier family 12 member 7 of Rattus norvegicus (Rat).